The following is a 492-amino-acid chain: UDP-glucosyl transferase 73DL1 (492 aa).

Histidine 27 acts as the Proton acceptor in catalysis. The Charge relay role is filled by aspartate 131. UDP-binding residues include tryptophan 352, valine 353, histidine 370, threonine 375, glutamate 378, and tyrosine 392.

Belongs to the UDP-glycosyltransferase family. As to expression, mainly expressed in flowers, flower buds and young leaves, and, to a lesser extent, in old leaves, stems and roots.

Its pathway is secondary metabolite biosynthesis; terpenoid biosynthesis. Its function is as follows. Component of the oleanane-type triterpene saponins (e.g. saponarioside A and saponarioside B) biosynthetic pathway, leading to the production of natural products with detergent properties used as traditional sources of soap. A glycosyltransferase that mediates the conversion of QA-mono to QA-di via the elongation of the C-3 sugar chain with a D-galactose. The sequence is that of UDP-glucosyl transferase 73DL1 from Saponaria officinalis (Common soapwort).